A 188-amino-acid chain; its full sequence is Adenine phosphoribosyltransferase (188 aa).

It belongs to the purine/pyrimidine phosphoribosyltransferase family. Homodimer.

The protein resides in the cytoplasm. The catalysed reaction is AMP + diphosphate = 5-phospho-alpha-D-ribose 1-diphosphate + adenine. It functions in the pathway purine metabolism; AMP biosynthesis via salvage pathway; AMP from adenine: step 1/1. In terms of biological role, catalyzes a salvage reaction resulting in the formation of AMP, that is energically less costly than de novo synthesis. This is Adenine phosphoribosyltransferase from Paraburkholderia phymatum (strain DSM 17167 / CIP 108236 / LMG 21445 / STM815) (Burkholderia phymatum).